A 286-amino-acid chain; its full sequence is 4-hydroxybenzoate octaprenyltransferase (286 aa).

The next 7 helical transmembrane spans lie at 21–40, 96–116, 142–162, 167–187, 210–230, 235–255, and 266–286; these read GTLL…AGGM, LFVI…GLVV, FLGV…TGEV, WWLF…YAMV, QIIG…GWSA, LYGL…MLIF, and FLNN…DYLF.

Belongs to the UbiA prenyltransferase family. It depends on Mg(2+) as a cofactor.

The protein localises to the cell inner membrane. The enzyme catalyses all-trans-octaprenyl diphosphate + 4-hydroxybenzoate = 4-hydroxy-3-(all-trans-octaprenyl)benzoate + diphosphate. Its pathway is cofactor biosynthesis; ubiquinone biosynthesis. Its function is as follows. Catalyzes the prenylation of para-hydroxybenzoate (PHB) with an all-trans polyprenyl group. Mediates the second step in the final reaction sequence of ubiquinone-8 (UQ-8) biosynthesis, which is the condensation of the polyisoprenoid side chain with PHB, generating the first membrane-bound Q intermediate 3-octaprenyl-4-hydroxybenzoate. In Shewanella sp. (strain ANA-3), this protein is 4-hydroxybenzoate octaprenyltransferase.